The primary structure comprises 167 residues: Xanthine-guanine phosphoribosyltransferase (167 aa).

Residues 47-48 (RG), Gln79, and 102-110 (DDLVDSGKT) each bind 5-phospho-alpha-D-ribose 1-diphosphate. Gln79 lines the GMP pocket. Asp103 lines the Mg(2+) pocket. Guanine-binding residues include Asp106 and Ile149. Residues Asp106 and Ile149 each contribute to the xanthine site. GMP-binding positions include 106–110 (DSGKT) and 148–149 (WI).

Belongs to the purine/pyrimidine phosphoribosyltransferase family. XGPT subfamily. Homotetramer. The cofactor is Mg(2+).

It is found in the cell inner membrane. The enzyme catalyses GMP + diphosphate = guanine + 5-phospho-alpha-D-ribose 1-diphosphate. The catalysed reaction is XMP + diphosphate = xanthine + 5-phospho-alpha-D-ribose 1-diphosphate. It carries out the reaction IMP + diphosphate = hypoxanthine + 5-phospho-alpha-D-ribose 1-diphosphate. It functions in the pathway purine metabolism; GMP biosynthesis via salvage pathway; GMP from guanine: step 1/1. Its pathway is purine metabolism; XMP biosynthesis via salvage pathway; XMP from xanthine: step 1/1. Functionally, purine salvage pathway enzyme that catalyzes the transfer of the ribosyl-5-phosphate group from 5-phospho-alpha-D-ribose 1-diphosphate (PRPP) to the N9 position of the 6-oxopurines guanine and xanthine to form the corresponding ribonucleotides GMP (guanosine 5'-monophosphate) and XMP (xanthosine 5'-monophosphate), with the release of PPi. To a lesser extent, also acts on hypoxanthine. The chain is Xanthine-guanine phosphoribosyltransferase from Cereibacter sphaeroides (strain ATCC 17029 / ATH 2.4.9) (Rhodobacter sphaeroides).